The following is a 101-amino-acid chain: ATP-dependent Clp protease adapter protein ClpS (101 aa).

It belongs to the ClpS family. Binds to the N-terminal domain of the chaperone ClpA.

Its function is as follows. Involved in the modulation of the specificity of the ClpAP-mediated ATP-dependent protein degradation. This is ATP-dependent Clp protease adapter protein ClpS from Mycobacterium bovis (strain ATCC BAA-935 / AF2122/97).